Here is a 237-residue protein sequence, read N- to C-terminus: Uracil-DNA glycosylase (237 aa).

Catalysis depends on Asp77, which acts as the Proton acceptor.

Belongs to the uracil-DNA glycosylase (UDG) superfamily. UNG family.

Its subcellular location is the cytoplasm. It catalyses the reaction Hydrolyzes single-stranded DNA or mismatched double-stranded DNA and polynucleotides, releasing free uracil.. Excises uracil residues from the DNA which can arise as a result of misincorporation of dUMP residues by DNA polymerase or due to deamination of cytosine. The sequence is that of Uracil-DNA glycosylase from Acinetobacter baumannii (strain ACICU).